The primary structure comprises 190 residues: dCTP deaminase, dUMP-forming (190 aa).

DCTP-binding positions include 101-106, Asp-119, 127-129, Gln-148, Tyr-162, and Gln-174; these read KSSLGR and TLE. Glu-129 serves as the catalytic Proton donor/acceptor. The tract at residues 162-184 is disordered; it reads YGSAKVGSKYQGQRGPTPSRSYQ. Positions 171–184 are enriched in polar residues; that stretch reads YQGQRGPTPSRSYQ.

The protein belongs to the dCTP deaminase family. In terms of assembly, homotrimer.

It catalyses the reaction dCTP + 2 H2O = dUMP + NH4(+) + diphosphate. It participates in pyrimidine metabolism; dUMP biosynthesis; dUMP from dCTP: step 1/1. Bifunctional enzyme that catalyzes both the deamination of dCTP to dUTP and the hydrolysis of dUTP to dUMP without releasing the toxic dUTP intermediate. In Mycobacterium sp. (strain JLS), this protein is dCTP deaminase, dUMP-forming.